We begin with the raw amino-acid sequence, 1365 residues long: Patatin-like phospholipase domain-containing protein 6 (1365 aa).

Residues 1–50 (MGTSSHGLATNSSGAKVAERDGFQDVPAPGEGAAGRICGAQPVPFVPQVL) are Lumenal-facing. N-linked (GlcNAc...) asparagine glycosylation occurs at Asn11. A helical membrane pass occupies residues 51–71 (GVMIGAGVAVVVTAVLILLVV). The Cytoplasmic segment spans residues 72–1365 (RRLRVPKTPA…QEPPGSATDA (1294 aa)). 186 to 313 (VLGHFEKPLF…VRVVQIIMVR (128 aa)) lines the a nucleoside 3',5'-cyclic phosphate pocket. Disordered regions lie at residues 343 to 427 (FPSP…RSDF) and 441 to 463 (QEGA…PREQ). Ser345 is modified (phosphoserine). Residues 350 to 367 (TRTSPVRGSKRMVSTSAT) show a composition bias toward polar residues. The residue at position 352 (Thr352) is a Phosphothreonine. Phosphoserine occurs at positions 353 and 363. The span at 375–389 (GRPPDPTGAPLPGPT) shows a compositional bias: pro residues. A Phosphoserine modification is found at Ser411. Thr455 is modified (phosphothreonine). A nucleoside 3',5'-cyclic phosphate contacts are provided by residues 502–624 (ELAK…VAAR) and 620–740 (TVAA…LSQK). A PNPLA domain is found at 971 to 1137 (LVLGGGGARG…INNLPADIAR (167 aa)). Residues 975–980 (GGGARG) carry the GXGXXG motif. Residues 1002–1006 (GTSIG) carry the GXSXG motif. The active-site Nucleophile is Ser1004. Asp1124 acts as the Proton acceptor in catalysis. The DGA/G motif lies at 1124 to 1126 (DGG). Residues 1296–1365 (SYVSDGCADG…QEPPGSATDA (70 aa)) are disordered. Acidic residues predominate over residues 1303–1319 (ADGEESDCLTEYEEDAG).

Belongs to the NTE family. In terms of processing, glycosylated.

The protein resides in the endoplasmic reticulum membrane. It carries out the reaction a 1-acyl-sn-glycero-3-phosphocholine + H2O = sn-glycerol 3-phosphocholine + a fatty acid + H(+). The enzyme catalyses 1-hexadecanoyl-sn-glycero-3-phosphocholine + H2O = sn-glycerol 3-phosphocholine + hexadecanoate + H(+). It catalyses the reaction 1-(9Z-octadecenoyl)-sn-glycero-3-phosphocholine + H2O = sn-glycerol 3-phosphocholine + (9Z)-octadecenoate + H(+). The catalysed reaction is 1-hexadecanoylglycerol + H2O = glycerol + hexadecanoate + H(+). It carries out the reaction 2-hexadecanoylglycerol + H2O = glycerol + hexadecanoate + H(+). The enzyme catalyses 1-(9Z-octadecenoyl)-glycerol + H2O = glycerol + (9Z)-octadecenoate + H(+). It catalyses the reaction 2-(9Z-octadecenoyl)-glycerol + H2O = glycerol + (9Z)-octadecenoate + H(+). The catalysed reaction is 2-(5Z,8Z,11Z,14Z-eicosatetraenoyl)-glycerol + H2O = glycerol + (5Z,8Z,11Z,14Z)-eicosatetraenoate + H(+). It carries out the reaction 1-hexadecanoyl-sn-glycero-3-phosphate + H2O = sn-glycerol 3-phosphate + hexadecanoate + H(+). With respect to regulation, inhibited by a series a OPs such as mipafox (MPX), phenyl saligenin phosphate (PSP), phenyl dipentyl phosphinate (PDPP), diisopropyl fluorophosphate and paraoxon. In terms of biological role, phospholipase B that deacylates intracellular phosphatidylcholine (PtdCho), generating glycerophosphocholine (GroPtdCho). This deacylation occurs at both sn-2 and sn-1 positions of PtdCho. Catalyzes the hydrolysis of several naturally occurring membrane-associated lipids. Hydrolyzes lysophospholipids and monoacylglycerols, preferring the 1-acyl to the 2-acyl isomer. Does not catalyze hydrolysis of di- or triacylglycerols or fatty acid amides. In Pongo abelii (Sumatran orangutan), this protein is Patatin-like phospholipase domain-containing protein 6 (PNPLA6).